We begin with the raw amino-acid sequence, 719 residues long: Leucine-rich repeat and fibronectin type-III domain-containing protein 5 (719 aa).

The signal sequence occupies residues 1 to 17; that stretch reads MEKFLFYLFLIGIAVRA. In terms of domain architecture, LRRNT spans 18 to 51; the sequence is QICPKRCVCQILSPNLATLCAKKGLLFVPPNIDR. At 18 to 529 the chain is on the extracellular side; that stretch reads QICPKRCVCQ…MQSQFLGGTM (512 aa). LRR repeat units follow at residues 52 to 73, 76 to 97, 100 to 121, 124 to 145, 148 to 169, 172 to 193, and 196 to 217; these read RTVE…DFAN, SLVD…AFAD, NLRA…MFSG, NLHH…AFDD, ALEE…AVEK, SLHT…TFSH, and KMTR…PLFQ. Asparagine 73 carries an N-linked (GlcNAc...) asparagine glycan. Positions 240 to 286 constitute an LRRCT domain; the sequence is NPLHCNCELLWLRRLSREDDLETCASPALLTGRYFWSIPEEEFLCEP. An Ig-like domain is found at 287–373; sequence PLITRHTHEM…GEATQTVDLH (87 aa). A disulfide bond links cysteine 308 and cysteine 357. N-linked (GlcNAc...) asparagine glycosylation is found at asparagine 330, asparagine 339, asparagine 382, asparagine 406, and asparagine 452. Residues 385 to 416 form a disordered region; sequence NHIHEPDPGSSDISTSTKSGSNASSSNGDTKM. The span at 393 to 412 shows a compositional bias: low complexity; the sequence is GSSDISTSTKSGSNASSSNG. The 90-residue stretch at 414-503 folds into the Fibronectin type-III domain; that stretch reads TKMSQDKIVV…ITSLTATRVV (90 aa). A helical membrane pass occupies residues 530-550; it reads IIIIGGIIVASVLVFIIILMI. Residues 551-719 lie on the Cytoplasmic side of the membrane; that stretch reads RYKVCNNNGQ…VQETQRLESI (169 aa). Residues 614-627 show a composition bias toward low complexity; the sequence is SETCSSQDSSTTTS. The interval 614–719 is disordered; it reads SETCSSQDSS…VQETQRLESI (106 aa). Composition is skewed to polar residues over residues 628–641, 654–677, and 702–713; these read ALPP…PVSQ, EPQS…TALQ, and LLTNVDQNVQET.

It belongs to the LRFN family. In terms of assembly, can form heteromeric complexes with LRFN1, LRFN2, LRFN3 and LFRN4. Able to form homomeric complexes across cell junctions, between adjacent cells. Does not interact with DLG1, DLG2 or DLG3. Does not interact with DLG4. In terms of processing, glycosylated. Predominantly expressed in the brain, with a weak, but broad expression in the cerebral cortex and diencephalic nuclei. Strongly expressed in both the pyramidal layer and the dentate gyrus of the hippocampus. Also detected in other parts of the central nervous system, including the olfactory bulb, pons, cerebellum, and medulla oblongata, as well as in the peripheral nervous system, such as the ganglia of cranial nerves and the dorsal root ganglion during gestation.

The protein localises to the membrane. In terms of biological role, cell adhesion molecule that mediates homophilic cell-cell adhesion in a Ca(2+)-independent manner. Promotes neurite outgrowth in hippocampal neurons. The sequence is that of Leucine-rich repeat and fibronectin type-III domain-containing protein 5 (Lrfn5) from Mus musculus (Mouse).